Consider the following 213-residue polypeptide: Ribonuclease HII (213 aa).

The RNase H type-2 domain occupies 1 to 206; that stretch reads MICGVDEAGK…VSTLLAKKTQ (206 aa). A divalent metal cation-binding residues include Asp6, Glu7, and Asp101.

This sequence belongs to the RNase HII family. The cofactor is Mn(2+). It depends on Mg(2+) as a cofactor.

The protein resides in the cytoplasm. The enzyme catalyses Endonucleolytic cleavage to 5'-phosphomonoester.. Endonuclease that specifically degrades the RNA of RNA-DNA hybrids. The polypeptide is Ribonuclease HII (Methanoregula boonei (strain DSM 21154 / JCM 14090 / 6A8)).